Here is a 376-residue protein sequence, read N- to C-terminus: Probable dual-specificity RNA methyltransferase RlmN (376 aa).

Residues 1 to 25 (MSDSERTSLPLVFDEPRGRKKPPRH) are disordered. Glu113 acts as the Proton acceptor in catalysis. In terms of domain architecture, Radical SAM core spans 119-362 (YPDRATMCVS…PTTVRDTRGR (244 aa)). Cys126 and Cys368 form a disulfide bridge. Positions 133, 137, and 140 each coordinate [4Fe-4S] cluster. S-adenosyl-L-methionine-binding positions include 188–189 (GE), Ser222, 245–247 (SLH), and Asn325. Residue Cys368 is the S-methylcysteine intermediate of the active site.

The protein belongs to the radical SAM superfamily. RlmN family. [4Fe-4S] cluster serves as cofactor.

It localises to the cytoplasm. It carries out the reaction adenosine(2503) in 23S rRNA + 2 reduced [2Fe-2S]-[ferredoxin] + 2 S-adenosyl-L-methionine = 2-methyladenosine(2503) in 23S rRNA + 5'-deoxyadenosine + L-methionine + 2 oxidized [2Fe-2S]-[ferredoxin] + S-adenosyl-L-homocysteine. The enzyme catalyses adenosine(37) in tRNA + 2 reduced [2Fe-2S]-[ferredoxin] + 2 S-adenosyl-L-methionine = 2-methyladenosine(37) in tRNA + 5'-deoxyadenosine + L-methionine + 2 oxidized [2Fe-2S]-[ferredoxin] + S-adenosyl-L-homocysteine. Functionally, specifically methylates position 2 of adenine 2503 in 23S rRNA and position 2 of adenine 37 in tRNAs. This Nocardioides sp. (strain ATCC BAA-499 / JS614) protein is Probable dual-specificity RNA methyltransferase RlmN.